Here is a 511-residue protein sequence, read N- to C-terminus: Probable lipid II flippase MurJ (511 aa).

The next 13 helical transmembrane spans lie at 31–51 (IFGA…PNLL), 90–110 (LLTL…PWVI), 130–150 (LLKI…VGAI), 159–179 (IPAF…LFAA), 182–202 (FNPP…LQLV), 237–257 (ILGV…ASFL), 271–291 (LMEF…LPSL), 314–334 (CFLL…PLTV), 354–374 (LIAY…APGF), 383–403 (PVKI…AFIG), 407–427 (HAGL…LLYW), 443–463 (AFLL…LGML), and 481–501 (LMAV…VLGF).

This sequence belongs to the MurJ/MviN family.

It localises to the cell inner membrane. It participates in cell wall biogenesis; peptidoglycan biosynthesis. Functionally, involved in peptidoglycan biosynthesis. Transports lipid-linked peptidoglycan precursors from the inner to the outer leaflet of the cytoplasmic membrane. The chain is Probable lipid II flippase MurJ from Escherichia coli O157:H7.